A 595-amino-acid polypeptide reads, in one-letter code: Aspartate--tRNA ligase (595 aa).

Residue glutamate 173 coordinates L-aspartate. An aspartate region spans residues 197–200 (QLFK). An L-aspartate-binding site is contributed by arginine 219. Residues 219 to 221 (RDE) and glutamine 228 each bind ATP. Residue histidine 449 coordinates L-aspartate. Glutamate 483 is an ATP binding site. Arginine 490 is a binding site for L-aspartate. 535–538 (GLDR) provides a ligand contact to ATP.

It belongs to the class-II aminoacyl-tRNA synthetase family. Type 1 subfamily. As to quaternary structure, homodimer.

It localises to the cytoplasm. The enzyme catalyses tRNA(Asp) + L-aspartate + ATP = L-aspartyl-tRNA(Asp) + AMP + diphosphate. Its function is as follows. Catalyzes the attachment of L-aspartate to tRNA(Asp) in a two-step reaction: L-aspartate is first activated by ATP to form Asp-AMP and then transferred to the acceptor end of tRNA(Asp). This Shewanella sediminis (strain HAW-EB3) protein is Aspartate--tRNA ligase.